Here is a 303-residue protein sequence, read N- to C-terminus: Growth/differentiation factor 15 (303 aa).

Residues 1 to 30 form the signal peptide; it reads MAPPALQAQPPGGSQLRFLLFLLLLLLLLS. Residues 31–188 constitute a propeptide that is removed on maturation; sequence WPSQGDALAM…LRVAAGRGRR (158 aa). N71 carries N-linked (GlcNAc...) asparagine glycosylation. 4 cysteine pairs are disulfide-bonded: C198–C205, C206–C269, C235–C300, and C239–C302.

It belongs to the TGF-beta family. Homodimer; disulfide-linked. Interacts with GFRAL and RET; ligand of GFRAL, which mediates GDF15 internalization and cellular signaling through interaction with RET via the formation of a 2:2:2 ternary complex composed of GDF15, GFRAL and RET. In terms of tissue distribution, detected in plasma (at protein level). Highly expressed in liver. Expressed in the distal small intestine, colon and kidney. Expressed in skeletal muscle in response to mitochondrial stress. Expressed by cardiomyocytes, expression is highly increased in heart diseases. Also detected in subcutaneous fat.

It localises to the secreted. In terms of biological role, hormone produced in response to various stresses to confer information about those stresses to the brain, and trigger an aversive response, characterized by nausea and/or loss of appetite. The aversive response is both required to reduce continuing exposure to those stresses at the time of exposure and to promote avoidance behavior in the future. Acts by binding to its receptor, GFRAL, activating GFRAL-expressing neurons localized in the area postrema and nucleus tractus solitarius of the brainstem. It then triggers the activation of neurons localized within the parabrachial nucleus and central amygdala, which constitutes part of the 'emergency circuit' that shapes responses to stressful conditions. The GDF15-GFRAL signal induces expression of genes involved in metabolism, such as lipid metabolism in adipose tissues. Required for avoidance behavior in response to food allergens: induced downstream of mast cell activation to promote aversion and minimize harmful effects of exposure to noxious substances. In addition to suppress appetite, also promotes weight loss by enhancing energy expenditure in muscle: acts by increasing calcium futile cycling in muscle. Contributes to the effect of metformin, an anti-diabetic drug, on appetite reduction and weight loss: produced in the kidney in response to metformin treatment, thereby activating the GDF15-GFRAL response, leading to reduced appetite and weight. Produced in response to anticancer drugs, such as camptothecin or cisplatin, promoting nausea and contributing to malnutrition. Overproduced in many cancers, promoting anorexia in cancer (cachexia). Responsible for the risk of nausea during pregnancy: high levels of GDF15 during pregnancy, mostly originating from embryos, are associated with increased nausea. Maternal sensitivity to nausea is probably determined by pre-pregnancy exposure to GDF15, females with naturally high level of GDF15 being less susceptible to nausea than female mice with low levels of GDF15 before pregnancy. Promotes metabolic adaptation in response to systemic inflammation caused by bacterial and viral infections in order to promote tissue tolerance and prevent tissue damage. Required for tissue tolerance in response to myocardial infarction by acting as an inhibitor of leukocyte integring activation, thereby protecting against cardiac rupture. Inhibits growth hormone signaling on hepatocytes. The chain is Growth/differentiation factor 15 from Mus musculus (Mouse).